The following is a 139-amino-acid chain: Proline-rich protein 13 (139 aa).

The interval 1–139 is disordered; it reads MWNPSAGPNP…SSSSSSSDSD (139 aa). Pro residues-rich tracts occupy residues 24–62 and 70–91; these read ACPP…PQPG and GPYP…PPAP. The span at 103–124 shows a compositional bias: basic residues; that stretch reads KTRKKMKKAHKKSHKHHKHGKH. Low complexity predominate over residues 125 to 139; the sequence is SSSSSSSSSSSSDSD.

Its subcellular location is the nucleus. Its function is as follows. Negatively regulates TSP1 expression at the level of transcription. This down-regulation was shown to reduce taxane-induced apoptosis. The polypeptide is Proline-rich protein 13 (Prr13) (Rattus norvegicus (Rat)).